A 182-amino-acid chain; its full sequence is Isopentenyl-diphosphate Delta-isomerase (182 aa).

Mn(2+) contacts are provided by H25 and H32. A Nudix hydrolase domain is found at 30–164; that stretch reads LLHLAFSSWL…PWAFSPWMVM (135 aa). Residue C67 is part of the active site. Residue H69 participates in Mn(2+) binding. E87 lines the Mg(2+) pocket. Residues E114 and E116 each contribute to the Mn(2+) site. E116 is an active-site residue.

The protein belongs to the IPP isomerase type 1 family. In terms of assembly, homodimer. Requires Mg(2+) as cofactor. It depends on Mn(2+) as a cofactor.

The protein resides in the cytoplasm. The enzyme catalyses isopentenyl diphosphate = dimethylallyl diphosphate. It participates in isoprenoid biosynthesis; dimethylallyl diphosphate biosynthesis; dimethylallyl diphosphate from isopentenyl diphosphate: step 1/1. Its function is as follows. Catalyzes the 1,3-allylic rearrangement of the homoallylic substrate isopentenyl (IPP) to its highly electrophilic allylic isomer, dimethylallyl diphosphate (DMAPP). This Escherichia coli O45:K1 (strain S88 / ExPEC) protein is Isopentenyl-diphosphate Delta-isomerase.